The chain runs to 65 residues: Large ribosomal subunit protein bL33 (65 aa).

The disordered stretch occupies residues Thr19–Arg40.

It belongs to the bacterial ribosomal protein bL33 family.

The polypeptide is Large ribosomal subunit protein bL33 (Prochlorococcus marinus (strain NATL2A)).